The following is a 924-amino-acid chain: Protein SMAX1-LIKE 2 (924 aa).

One can recognise a Clp R domain in the interval 8 to 181; sequence IQQTLTPEAA…SAIEQSLIGN (174 aa). A repeat 1 region spans residues 12–83; the sequence is LTPEAATVLN…LCFSVALERL (72 aa). Positions 86-105 are enriched in low complexity; that stretch reads TSTTTTTTSSSSSSSPSQTQ. Residues 86–107 are disordered; it reads TSTTTTTTSSSSSSSPSQTQEP. The segment at 109 to 181 is repeat 2; it reads LSNALTAALK…SAIEQSLIGN (73 aa). The interval 522-552 is disordered; sequence TRSDITPPGSPVGTDLVLGRPNRGLSSPEKK. Positions 780–784 match the EAR motif; sequence FDLNE.

Belongs to the ClpA/ClpB family. In terms of assembly, interacts probably with TPL/TPR in an EAR-motif dependent manner. As to expression, expressed in seedlings and leaves. Detected in roots and axillary branches.

Functionally, probable component of a transcriptional corepressor complex that acts specifically in the karrikin pathway. Controls seedling growth redundantly with SMAX1, but is not involved in leaf morphology, shoot branching or germination control. This chain is Protein SMAX1-LIKE 2, found in Arabidopsis thaliana (Mouse-ear cress).